We begin with the raw amino-acid sequence, 587 residues long: Barrierpepsin (587 aa).

Residues 1–24 (MSAINHLCLKLILASFAIINTITA) form the signal peptide. In terms of domain architecture, Peptidase A1 spans 45 to 393 (YATTLDIGTP…DLDNYKISLA (349 aa)). Aspartate 63 is a catalytic residue. 3 N-linked (GlcNAc...) asparagine glycosylation sites follow: asparagine 84, asparagine 90, and asparagine 268. Residue aspartate 287 is part of the active site. An N-linked (GlcNAc...) asparagine glycan is attached at asparagine 308. Cysteine 322 and cysteine 358 are joined by a disulfide. N-linked (GlcNAc...) asparagine glycosylation is found at asparagine 366, asparagine 398, asparagine 468, asparagine 503, and asparagine 551. Residues 466-505 (SRNCSTKMPGTRSTTVLSKPTQNSAMHQSTGAVTQTSNET) are disordered.

Belongs to the peptidase A1 family.

The protein localises to the secreted. It carries out the reaction Selective cleavage of 6-Leu-|-Lys-7 bond in the pheromone alpha-mating factor.. Functionally, this protein called 'barrier activity' is excreted by yeast cells mating type a. It is probably a protease that cleaves alpha-factor and thus acts as an antagonist of this mating pheromone and establishes optimal pheromone concentration for conjugation. The protein is Barrierpepsin (BAR1) of Saccharomyces cerevisiae (strain ATCC 204508 / S288c) (Baker's yeast).